A 444-amino-acid chain; its full sequence is CCA-adding enzyme (444 aa).

The ATP site is built by Ser57 and Arg60. Positions 57 and 60 each coordinate CTP. Mg(2+) is bound by residues Asp69, Asp71, and Asp124. Positions 147, 168, and 177 each coordinate ATP. Residues His147, Lys168, and Tyr177 each contribute to the CTP site.

It belongs to the tRNA nucleotidyltransferase/poly(A) polymerase family. Archaeal CCA-adding enzyme subfamily. As to quaternary structure, homodimer. Mg(2+) is required as a cofactor.

The catalysed reaction is a tRNA precursor + 2 CTP + ATP = a tRNA with a 3' CCA end + 3 diphosphate. The enzyme catalyses a tRNA with a 3' CCA end + 2 CTP + ATP = a tRNA with a 3' CCACCA end + 3 diphosphate. Functionally, catalyzes the addition and repair of the essential 3'-terminal CCA sequence in tRNAs without using a nucleic acid template. Adds these three nucleotides in the order of C, C, and A to the tRNA nucleotide-73, using CTP and ATP as substrates and producing inorganic pyrophosphate. tRNA 3'-terminal CCA addition is required both for tRNA processing and repair. Also involved in tRNA surveillance by mediating tandem CCA addition to generate a CCACCA at the 3' terminus of unstable tRNAs. While stable tRNAs receive only 3'-terminal CCA, unstable tRNAs are marked with CCACCA and rapidly degraded. This is CCA-adding enzyme from Methanococcus maripaludis (strain C7 / ATCC BAA-1331).